The chain runs to 350 residues: fMet-Leu-Phe receptor (350 aa).

Over 1–27 the chain is Extracellular; sequence METNSSLPTNISGGTPAVSAGYLFLDI. 2 N-linked (GlcNAc...) asparagine glycosylation sites follow: asparagine 4 and asparagine 10. A helical transmembrane segment spans residues 28–50; that stretch reads ITYLVFAVTFVLGVLGNGLVIWV. The Cytoplasmic portion of the chain corresponds to 51–61; the sequence is AGFRMTHTVTT. The helical transmembrane segment at 62–83 threads the bilayer; the sequence is ISYLNLAVADFCFTSTLPFFMV. The Extracellular segment spans residues 84–100; that stretch reads RKAMGGHWPFGWFLCKF. Cysteines 98 and 176 form a disulfide. A helical membrane pass occupies residues 101-121; sequence VFTIVDINLFGSVFLIALIAL. Over 122-140 the chain is Cytoplasmic; sequence DRCVCVLHPVWTQNHRTVS. The helical transmembrane segment at 141-162 threads the bilayer; that stretch reads LAKKVIIGPWVMALLLTLPVII. Topologically, residues 163–205 are extracellular; sequence RVTTVPGKTGTVACTFNFSPWTNDPKERINVAVAMLTVRGIIR. A helical transmembrane segment spans residues 206–226; the sequence is FIIGFSAPMSIVAVSYGLIAT. The Cytoplasmic segment spans residues 227-242; sequence KIHKQGLIKSSRPLRV. A helical membrane pass occupies residues 243–266; the sequence is LSFVAAAFFLCWSPYQVVALIATV. The Extracellular segment spans residues 267-285; sequence RIRELLQGMYKEIGIAVDV. A helical membrane pass occupies residues 286–305; sequence TSALAFFNSCLNPMLYVFMG. Over 306-350 the chain is Cytoplasmic; sequence QDFRERLIHALPASLERALTEDSTQTSDTATNSTLPSAEVELQAK. The segment at 325 to 350 is disordered; it reads TEDSTQTSDTATNSTLPSAEVELQAK. Residues 326 to 341 show a composition bias toward polar residues; that stretch reads EDSTQTSDTATNSTLP. The residue at position 328 (serine 328) is a Phosphoserine. Phosphothreonine occurs at positions 329 and 331. Phosphoserine is present on serine 332. Phosphothreonine is present on residues threonine 334 and threonine 336. At serine 338 the chain carries Phosphoserine. At threonine 339 the chain carries Phosphothreonine.

Belongs to the G-protein coupled receptor 1 family. Interacts with S.aureus chemotaxis inhibitory protein (CHIPS); the interaction blocks the receptor and may thus inhibit the immune response. In terms of processing, phosphorylated; which is necessary for desensitization. Neutrophils.

It is found in the cell membrane. Functionally, high affinity receptor for N-formyl-methionyl peptides (fMLP), which are powerful neutrophil chemotactic factors. Binding of fMLP to the receptor stimulates intracellular calcium mobilization and superoxide anion release. This response is mediated via a G-protein that activates a phosphatidylinositol-calcium second messenger system. Receptor for TAFA4, mediates its effects on chemoattracting macrophages, promoting phagocytosis and increasing ROS release. Receptor for cathepsin CTSG, leading to increased phagocyte chemotaxis. The polypeptide is fMet-Leu-Phe receptor (FPR1) (Homo sapiens (Human)).